A 570-amino-acid polypeptide reads, in one-letter code: MQGPLYIGFDLSTQQLKGLVVNSDLKVVYVSKFDFDADSHGFPIKKGVLTNEAEHEVFAPVALWLQALDGVLEGLRKQGMDFSQIKGISGAGQQHGSVYWGENAEKLLKELDASKTLEEQLDGAFSHPFSPNWQDSSTQKECDEFDAALGGQSELAFATGSKAHHRFTGPQIMRFQRKYPDVYKKTSRISLVSSFIASLFLGHIAPMDISDVCGMNLWNIKKGAYDEKLLQLCAGSSGVDDLKRKLGDVPEDGGIHLGPIDRYYVERYGFSPDCTIIPATGDNPATILALPLRASDAMVSLGTSTTFLMSTPSYKPDPATHFFNHPTTAGLYMFMLCYKNGGLARELVRDAVNEKLGEKPSTSWANFDKVTLETPPMGQKADSDPMKLGLFFPRPEIVPNLRSGQWRFDYNPKDGSLQPSNGGWDEPFDEARAIVESQMLSLRLRSRGLTQSPGEGIPAQPRRVYLVGGGSKNKAIAKVAGEILGGSEGVYKLEIGDNACALGAAYKAVWAMERAEGQTFEDLIGKRWHEEEFIEKIADGYQPGVFERYGQAAEGFEKMELEVLRQEGKH.

Substrate-binding residues include histidine 95, arginine 166, aspartate 282, and asparagine 283. ATP is bound by residues tryptophan 364, 469-470, and asparagine 473; that span reads GG.

This sequence belongs to the FGGY kinase family.

The protein resides in the cytoplasm. The catalysed reaction is D-xylulose + ATP = D-xylulose 5-phosphate + ADP + H(+). Functionally, highly specific D-xylulose kinase which participates in the catabolism of xylose. Xylose is a major component of hemicelluloses such as xylan. Most fungi utilize D-xylose via three enzymatic reactions, xylose reductase (XR), xylitol dehydrogenase (XDH), and xylulokinase, to form xylulose 5-phosphate, which enters pentose phosphate pathway. This chain is Probable D-xylulose kinase A (xkiA), found in Aspergillus niger (strain ATCC MYA-4892 / CBS 513.88 / FGSC A1513).